We begin with the raw amino-acid sequence, 175 residues long: MLVVLVGMMGAGKTTVGREYAKRHQMRFVDCDHEIEARTGVKVPTIFEIEGEAGFRRRESQLLDELTHETGLVLATGGGVVLDPANRAVLAARGIVVYLNVPTQVLWERTRNDRNRPLLQVSNPRERIESLYRERDPLYREVADIIVDGGRGNPGGMVRQVEKAIQNFHKKTCEH.

10-15 (GAGKTT) serves as a coordination point for ATP. Thr14 serves as a coordination point for Mg(2+). The substrate site is built by Asp32, Arg56, and Gly78. An ATP-binding site is contributed by Arg116. Arg135 contributes to the substrate binding site.

Belongs to the shikimate kinase family. In terms of assembly, monomer. The cofactor is Mg(2+).

It is found in the cytoplasm. The enzyme catalyses shikimate + ATP = 3-phosphoshikimate + ADP + H(+). The protein operates within metabolic intermediate biosynthesis; chorismate biosynthesis; chorismate from D-erythrose 4-phosphate and phosphoenolpyruvate: step 5/7. In terms of biological role, catalyzes the specific phosphorylation of the 3-hydroxyl group of shikimic acid using ATP as a cosubstrate. This Aromatoleum aromaticum (strain DSM 19018 / LMG 30748 / EbN1) (Azoarcus sp. (strain EbN1)) protein is Shikimate kinase.